Here is a 221-residue protein sequence, read N- to C-terminus: Protein LURP-one-related 17 (221 aa).

Residues 1–20 are disordered; sequence MFPFLKQRSRSVHGEDAPSS.

It belongs to the LOR family.

Its function is as follows. Might be related to the phospholipid scramblase and tubby-like superfamily of membrane tethered transcription factors. This chain is Protein LURP-one-related 17, found in Arabidopsis thaliana (Mouse-ear cress).